A 253-amino-acid chain; its full sequence is 5'-nucleotidase SurE (253 aa).

Residues Asp8, Asp9, Ser39, and Asn91 each coordinate a divalent metal cation.

This sequence belongs to the SurE nucleotidase family. The cofactor is a divalent metal cation.

The protein localises to the cytoplasm. The enzyme catalyses a ribonucleoside 5'-phosphate + H2O = a ribonucleoside + phosphate. Nucleotidase that shows phosphatase activity on nucleoside 5'-monophosphates. The sequence is that of 5'-nucleotidase SurE from Leptothrix cholodnii (strain ATCC 51168 / LMG 8142 / SP-6) (Leptothrix discophora (strain SP-6)).